Here is a 383-residue protein sequence, read N- to C-terminus: Chitinase-3-like protein 1 (383 aa).

A signal peptide spans Met1–Ala21. A GH18 domain is found at Tyr22 to Val383. A disulfide bond links Cys26 and Cys51. A glycan (N-linked (GlcNAc...) asparagine) is linked at Asn60. Residues Glu70 to Trp71, Gly97 to Asn100, Tyr141, Leu204 to Asp207, and Arg263 contribute to the chitin site. Cys300 and Cys364 are joined by a disulfide. The important for AKT1 activation and IL8 production stretch occupies residues Gln324 to Ala338. Trp352 is a chitin binding site. Asn367 is a glycosylation site (N-linked (GlcNAc...) asparagine).

Belongs to the glycosyl hydrolase 18 family. As to quaternary structure, monomer. In terms of processing, glycosylated. As to expression, mammary secretions collected during the non-lactating period.

It localises to the secreted. The protein resides in the extracellular space. The protein localises to the cytoplasm. Its subcellular location is the perinuclear region. It is found in the endoplasmic reticulum. In terms of biological role, carbohydrate-binding lectin with a preference for chitin. Has no chitinase activity. May play a role in tissue remodeling and in the capacity of cells to respond to and cope with changes in their environment. Plays a role in T-helper cell type 2 (Th2) inflammatory response and IL-13-induced inflammation, regulating allergen sensitization, inflammatory cell apoptosis, dendritic cell accumulation and M2 macrophage differentiation. Facilitates invasion of pathogenic enteric bacteria into colonic mucosa and lymphoid organs. Mediates activation of AKT1 signaling pathway and subsequent IL8 production in colonic epithelial cells. Regulates antibacterial responses in lung by contributing to macrophage bacterial killing, controlling bacterial dissemination and augmenting host tolerance. Also regulates hyperoxia-induced injury, inflammation and epithelial apoptosis in lung. The sequence is that of Chitinase-3-like protein 1 (CHI3L1) from Bos taurus (Bovine).